The following is a 329-amino-acid chain: Nicotianamine synthase 8 (329 aa).

It belongs to the nicotianamine synthase (NAS)-like family. As to quaternary structure, homotrimer.

The enzyme catalyses 3 S-adenosyl-L-methionine = nicotianamine + 3 S-methyl-5'-thioadenosine + 3 H(+). In terms of biological role, synthesizes nicotianamine, a polyamine that is the first intermediate in the synthesis of the phytosiderophores of the mugineic acid type found in gramineae which serve as a sensor for the physiological iron status within the plant, and/or might be involved in the transport of iron. The protein is Nicotianamine synthase 8 (NAS8) of Hordeum vulgare (Barley).